The chain runs to 539 residues: Chaperonin GroEL (539 aa).

ATP-binding positions include T29–P32, D86–T90, G413, D477–L479, and D493.

This sequence belongs to the chaperonin (HSP60) family. Forms a cylinder of 14 subunits composed of two heptameric rings stacked back-to-back. Interacts with the co-chaperonin GroES.

The protein localises to the cytoplasm. It catalyses the reaction ATP + H2O + a folded polypeptide = ADP + phosphate + an unfolded polypeptide.. Together with its co-chaperonin GroES, plays an essential role in assisting protein folding. The GroEL-GroES system forms a nano-cage that allows encapsulation of the non-native substrate proteins and provides a physical environment optimized to promote and accelerate protein folding. This is Chaperonin GroEL from Clostridium perfringens (strain ATCC 13124 / DSM 756 / JCM 1290 / NCIMB 6125 / NCTC 8237 / Type A).